A 122-amino-acid polypeptide reads, in one-letter code: Alkene monooxygenase system, ferredoxin component (122 aa).

The 96-residue stretch at 16–111 (VDVCAVDDLW…LKVEGGRVLI (96 aa)) folds into the Rieske domain. Cys-55, His-57, Cys-75, and His-78 together coordinate [2Fe-2S] cluster.

The protein belongs to the bacterial ring-hydroxylating dioxygenase ferredoxin component family. Homodimer. The alkene monooxygenase multicomponent enzyme system is composed of an electron transfer component and a monooxygenase component interacting with the effector protein XamoD. The electron transfer component is composed of a ferredoxin reductase (XamoF) and a ferredoxin (XamoC), and the monooxygenase component is formed by a heterohexamer (dimer of heterotrimers) of two alpha subunits (XamoA), two beta subunits (XamoE) and two gamma subunits (XamoB). The cofactor is [2Fe-2S] cluster.

It is found in the cytoplasm. In terms of biological role, ferredoxin component of the alkene monooxygenase multicomponent enzyme system which catalyzes the O2- and NADH-dependent epoxidation of short chain (C2 to C6) alkenes to their corresponding epoxides. Functions as an intermediate electron transfer protein. This is Alkene monooxygenase system, ferredoxin component from Xanthobacter autotrophicus (strain ATCC BAA-1158 / Py2).